Here is a 160-residue protein sequence, read N- to C-terminus: Ribosomal RNA large subunit methyltransferase H (160 aa).

S-adenosyl-L-methionine-binding residues include Leu76 and Gly108.

This sequence belongs to the RNA methyltransferase RlmH family. Homodimer.

It localises to the cytoplasm. The catalysed reaction is pseudouridine(1915) in 23S rRNA + S-adenosyl-L-methionine = N(3)-methylpseudouridine(1915) in 23S rRNA + S-adenosyl-L-homocysteine + H(+). Its function is as follows. Specifically methylates the pseudouridine at position 1915 (m3Psi1915) in 23S rRNA. In Rhodopseudomonas palustris (strain BisB5), this protein is Ribosomal RNA large subunit methyltransferase H.